A 244-amino-acid polypeptide reads, in one-letter code: tRNA (guanine-N(7)-)-methyltransferase (244 aa).

The span at M1 to Q10 shows a compositional bias: polar residues. The interval M1 to R20 is disordered. S-adenosyl-L-methionine-binding residues include E74, E99, D126, and D149. The active site involves D149. Residues K153, D185, and T222 to E225 contribute to the substrate site.

This sequence belongs to the class I-like SAM-binding methyltransferase superfamily. TrmB family.

It catalyses the reaction guanosine(46) in tRNA + S-adenosyl-L-methionine = N(7)-methylguanosine(46) in tRNA + S-adenosyl-L-homocysteine. Its pathway is tRNA modification; N(7)-methylguanine-tRNA biosynthesis. Its function is as follows. Catalyzes the formation of N(7)-methylguanine at position 46 (m7G46) in tRNA. This chain is tRNA (guanine-N(7)-)-methyltransferase, found in Pseudomonas aeruginosa (strain UCBPP-PA14).